We begin with the raw amino-acid sequence, 368 residues long: MTDNVLKLSRKNIKKLIPYQSARRIGGEHGNILLNANESPVSIFFKLKKKPFNRYPECQPSKLISSYAHYVNLSCNQILATRGADEGIELLIKAFCEPGKDAIIYCPPTYDMYRINATIAGVEIKEIPTIKNTWQLDLLNIKLNLSRVKLIYICNPNNPTGNIFFKKDLIFLLNITLGQALVVIDEAYIEFSPEESMTNYLKDYPNLVVLRTLSKAFALAGIRCGFTLAKKEIIQTLSKVISPYPISIPVSDIAIRSLEKDYVQLMKNRVLDSNNNRIWLINQLKNITCVETVFESNANYVLVKFSMFEKVFETLWNKGIILRNQNEKMNLKKCIRISMGTRSESLRLIKELKIFSKKNMCQGEMSEK.

Lysine 215 is modified (N6-(pyridoxal phosphate)lysine).

Belongs to the class-II pyridoxal-phosphate-dependent aminotransferase family. Histidinol-phosphate aminotransferase subfamily. Homodimer. It depends on pyridoxal 5'-phosphate as a cofactor.

It catalyses the reaction L-histidinol phosphate + 2-oxoglutarate = 3-(imidazol-4-yl)-2-oxopropyl phosphate + L-glutamate. It functions in the pathway amino-acid biosynthesis; L-histidine biosynthesis; L-histidine from 5-phospho-alpha-D-ribose 1-diphosphate: step 7/9. This is Histidinol-phosphate aminotransferase from Buchnera aphidicola subsp. Acyrthosiphon pisum (strain 5A).